Reading from the N-terminus, the 99-residue chain is Gibberellin-regulated protein 3 (99 aa).

Positions 1 to 26 (MAIFRSTLVLLLILFCLTTFELHVHA) are cleaved as a signal peptide.

This sequence belongs to the GASA family. Post-translationally, six disulfide bonds may be present. Expressed in siliques, dry seeds and vasculature of roots and rosette leaves.

It is found in the secreted. Its function is as follows. Gibberellin-regulated protein that may function in hormonal controlled steps of development such as seed germination, flowering and seed maturation. This chain is Gibberellin-regulated protein 3 (GASA3), found in Arabidopsis thaliana (Mouse-ear cress).